The following is a 102-amino-acid chain: Large ribosomal subunit protein bL28 (102 aa).

Residues 1–20 (MSRRCELTAKGPQVGHKVSH) form a disordered region.

The protein belongs to the bacterial ribosomal protein bL28 family.

This is Large ribosomal subunit protein bL28 from Bradyrhizobium sp. (strain BTAi1 / ATCC BAA-1182).